The primary structure comprises 103 residues: N(4)-acetylcytidine amidohydrolase (103 aa).

Residues Ile-6 to Gln-94 enclose the ASCH domain. Catalysis depends on Lys-21, which acts as the Proton acceptor. Thr-24 functions as the Nucleophile in the catalytic mechanism. Catalysis depends on Glu-74, which acts as the Proton donor.

Belongs to the N(4)-acetylcytidine amidohydrolase family.

The catalysed reaction is N(4)-acetylcytidine + H2O = cytidine + acetate + H(+). It carries out the reaction N(4)-acetyl-2'-deoxycytidine + H2O = 2'-deoxycytidine + acetate + H(+). It catalyses the reaction N(4)-acetylcytosine + H2O = cytosine + acetate + H(+). Catalyzes the hydrolysis of N(4)-acetylcytidine (ac4C). The chain is N(4)-acetylcytidine amidohydrolase from Citrobacter koseri (strain ATCC BAA-895 / CDC 4225-83 / SGSC4696).